An 889-amino-acid polypeptide reads, in one-letter code: Phosphofurin acidic cluster sorting protein 2 (889 aa).

Disordered stretches follow at residues 180 to 246, 293 to 463, and 687 to 740; these read DHED…TSMT, LDME…PDAR, and SSAT…SQGV. Basic and acidic residues predominate over residues 343-358; the sequence is SHKEPPSPADVPEKTR. A phosphoserine mark is found at Ser390, Ser416, Ser453, Ser691, and Ser694. 2 stretches are compositionally biased toward low complexity: residues 687–720 and 727–737; these read SSATSGDSDDAAPSGSGTLSSTPPSASPAAKEAS and PSVSGGLSSPS.

It belongs to the PACS family. As to quaternary structure, interacts with BID and PKD2. Interacts with SIRT1. Interacts with HDAC1. Interacts with TRPV1. Interacts with WDR37. In terms of assembly, (Microbial infection) Interacts with HIV-1 Nef. As to expression, broadly expressed, with greatest levels in skeletal muscle followed by heart, brain, pancreas and testis.

The protein resides in the endoplasmic reticulum. It is found in the mitochondrion. Multifunctional sorting protein that controls the endoplasmic reticulum (ER)-mitochondria communication, including the apposition of mitochondria with the ER and ER homeostasis. In addition, in response to apoptotic inducer, translocates BIB to mitochondria, which initiates a sequence of events including the formation of mitochondrial truncated BID, the release of cytochrome c, the activation of caspase-3 thereby causing cell death. May also be involved in ion channel trafficking, directing acidic cluster-containing ion channels to distinct subcellular compartments. This Homo sapiens (Human) protein is Phosphofurin acidic cluster sorting protein 2.